Consider the following 245-residue polypeptide: S-methyl-5'-thioinosine phosphorylase (245 aa).

Residues threonine 10 and 52 to 53 (RH) contribute to the phosphate site. Methionine 185 is a binding site for substrate. Threonine 186 serves as a coordination point for phosphate. 209–211 (NPA) contributes to the substrate binding site.

This sequence belongs to the PNP/MTAP phosphorylase family. MTAP subfamily. In terms of assembly, homotrimer.

It carries out the reaction S-methyl-5'-thioinosine + phosphate = 5-(methylsulfanyl)-alpha-D-ribose 1-phosphate + hypoxanthine. The protein operates within purine metabolism; purine nucleoside salvage. Its function is as follows. Catalyzes the reversible phosphorylation of S-methyl-5'-thioinosine (MTI) to hypoxanthine and 5-methylthioribose-1-phosphate. Involved in the breakdown of S-methyl-5'-thioadenosine (MTA), a major by-product of polyamine biosynthesis. Catabolism of (MTA) occurs via deamination to MTI and phosphorolysis to hypoxanthine. Involved in quorum sensing. This is S-methyl-5'-thioinosine phosphorylase from Pseudomonas aeruginosa (strain ATCC 15692 / DSM 22644 / CIP 104116 / JCM 14847 / LMG 12228 / 1C / PRS 101 / PAO1).